The following is a 228-amino-acid chain: Heptaprenylglyceryl phosphate synthase (228 aa).

Lys-12 is a binding site for sn-glycerol 1-phosphate. Asp-14 and Thr-40 together coordinate Mg(2+). Residues 159 to 164 (YLEYSG), Gly-189, and 209 to 210 (GN) each bind sn-glycerol 1-phosphate.

This sequence belongs to the GGGP/HepGP synthase family. Group I subfamily. In terms of assembly, homodimer. Mg(2+) serves as cofactor.

It catalyses the reaction sn-glycerol 1-phosphate + all-trans-heptaprenyl diphosphate = 3-heptaprenyl-sn-glycero-1-phosphate + diphosphate. It functions in the pathway membrane lipid metabolism; glycerophospholipid metabolism. Prenyltransferase that catalyzes in vivo the transfer of the heptaprenyl moiety of heptaprenyl pyrophosphate (HepPP; 35 carbon atoms) to the C3 hydroxyl of sn-glycerol-1-phosphate (G1P), producing heptaprenylglyceryl phosphate (HepGP). This reaction is an ether-bond-formation step in the biosynthesis of archaea-type G1P-based membrane lipids found in Bacillales. The polypeptide is Heptaprenylglyceryl phosphate synthase (Geobacillus sp. (strain WCH70)).